Consider the following 235-residue polypeptide: Secretory carrier-associated membrane protein 5 (235 aa).

Residues 1–39 lie on the Cytoplasmic side of the membrane; it reads MAEKVNNFPPLPKFIPLKPCFYQDFEADIPPQHVSMTKR. A helical transmembrane segment spans residues 40–60; it reads LYYLWMLNSVTLAVNLVGCLA. Topologically, residues 61 to 67 are extracellular; sequence WLIGGGG. The chain crosses the membrane as a helical span at residues 68–88; sequence ATNFGLAFLWLILFTPCSYVC. Residues 89–102 lie on the Cytoplasmic side of the membrane; it reads WFRPIYKAFKTDSS. Residues 103-125 form a helical membrane-spanning segment; it reads FSFMAFFFTFMAQLVISIIQAVG. Topologically, residues 126-148 are extracellular; it reads IPGWGVCGWIATISFFGTNIGSA. Residues 149-169 traverse the membrane as a helical segment; that stretch reads VVMLIPTVMFTVMAVFSFIAL. The Cytoplasmic portion of the chain corresponds to 170–235; it reads SMVHKFYRGS…TPNYTYSNEM (66 aa).

The protein belongs to the SCAMP family. SCAMP5 subfamily. As to quaternary structure, interacts (via C-terminal part) with SYT1 and SYT2; interaction with synaptotagmins making a link with the SNARE molecules. Interacts with SLC9A7. As to expression, expressed both by neuronal and non-neuronal tissues. Expressed in brain, stomach, thyroid, spinal cord, lymph node, trachea, adrenal gland, bone marrow and in the different parts of brain. In thyroid tissues, it is expressed by the follicular epithelial cells. In the adrenal gland tissues it is detected in the zona fasciculata of the cortex region (at protein level).

It is found in the cell membrane. The protein localises to the golgi apparatus membrane. Its subcellular location is the golgi apparatus. It localises to the trans-Golgi network membrane. The protein resides in the recycling endosome membrane. It is found in the cytoplasmic vesicle. The protein localises to the secretory vesicle. Its subcellular location is the synaptic vesicle membrane. Its function is as follows. Required for the calcium-dependent exocytosis of signal sequence-containing cytokines such as CCL5. Probably acts in cooperation with the SNARE machinery. May play a role in accumulation of expanded polyglutamine (polyQ) protein huntingtin (HTT) in case of endoplasmic reticulum stress by inhibiting the endocytosis pathway. This is Secretory carrier-associated membrane protein 5 (SCAMP5) from Homo sapiens (Human).